Here is a 255-residue protein sequence, read N- to C-terminus: MLQISHLYADYGGKPALEDINLTLESGELLVVLGPSGCGKTTLLNLIAGFVPYQHGSIQLAGKRIEGPGAERGVVFQNEGLLPWRNVQDNVAFGLQLAGIEKMQRLEIAHQMLKKVGLEGAEKRYIWQLSDGQRQRVGIARALAANPQLLLLDEPFGAQDAFTRDQMQTLLLKLWQETGKQVLLITHDIEEAVFMATELVLLSSGPGRVLERLRLNFARRFVAGESSRSIKSDPQFIAMREYVLSRVFEQREAFS.

The 228-residue stretch at 2–229 (LQISHLYADY…RFVAGESSRS (228 aa)) folds into the ABC transporter domain. An ATP-binding site is contributed by 34 to 41 (GPSGCGKT).

Belongs to the ABC transporter superfamily. Taurine importer (TC 3.A.1.17.1) family. In terms of assembly, the complex is composed of two ATP-binding proteins (TauB), two transmembrane proteins (TauC) and a solute-binding protein (TauA).

It localises to the cell inner membrane. The enzyme catalyses taurine(out) + ATP + H2O = taurine(in) + ADP + phosphate + H(+). Part of the ABC transporter complex TauABC involved in taurine import. Responsible for energy coupling to the transport system. This is Taurine import ATP-binding protein TauB from Shigella flexneri serotype 5b (strain 8401).